Consider the following 90-residue polypeptide: Protein A54 (90 aa).

This Homo sapiens (Human) protein is Protein A54.